A 270-amino-acid chain; its full sequence is Acetylglutamate kinase (270 aa).

Residues 53–54 (GG), arginine 75, and asparagine 167 each bind substrate.

This sequence belongs to the acetylglutamate kinase family. ArgB subfamily.

The protein resides in the cytoplasm. It carries out the reaction N-acetyl-L-glutamate + ATP = N-acetyl-L-glutamyl 5-phosphate + ADP. The protein operates within amino-acid biosynthesis; L-arginine biosynthesis; N(2)-acetyl-L-ornithine from L-glutamate: step 2/4. Functionally, catalyzes the ATP-dependent phosphorylation of N-acetyl-L-glutamate. In Shewanella halifaxensis (strain HAW-EB4), this protein is Acetylglutamate kinase.